The sequence spans 605 residues: Elongation factor 4 (605 aa).

In terms of domain architecture, tr-type G spans 11–193 (KRIRNFSIIA…QIVTRISPPQ (183 aa)). Residues 23–28 (DHGKST) and 140–143 (NKVD) contribute to the GTP site.

It belongs to the TRAFAC class translation factor GTPase superfamily. Classic translation factor GTPase family. LepA subfamily.

It localises to the cell membrane. The catalysed reaction is GTP + H2O = GDP + phosphate + H(+). In terms of biological role, required for accurate and efficient protein synthesis under certain stress conditions. May act as a fidelity factor of the translation reaction, by catalyzing a one-codon backward translocation of tRNAs on improperly translocated ribosomes. Back-translocation proceeds from a post-translocation (POST) complex to a pre-translocation (PRE) complex, thus giving elongation factor G a second chance to translocate the tRNAs correctly. Binds to ribosomes in a GTP-dependent manner. In Onion yellows phytoplasma (strain OY-M), this protein is Elongation factor 4.